Reading from the N-terminus, the 142-residue chain is Large ribosomal subunit protein bL17 (142 aa).

It belongs to the bacterial ribosomal protein bL17 family. Part of the 50S ribosomal subunit. Contacts protein L32.

This Wolbachia pipientis wMel protein is Large ribosomal subunit protein bL17.